A 165-amino-acid polypeptide reads, in one-letter code: Probable chemoreceptor glutamine deamidase CheD (165 aa).

It belongs to the CheD family.

The enzyme catalyses L-glutaminyl-[protein] + H2O = L-glutamyl-[protein] + NH4(+). Functionally, probably deamidates glutamine residues to glutamate on methyl-accepting chemotaxis receptors (MCPs), playing an important role in chemotaxis. This Symbiobacterium thermophilum (strain DSM 24528 / JCM 14929 / IAM 14863 / T) protein is Probable chemoreceptor glutamine deamidase CheD.